Consider the following 149-residue polypeptide: uncharacterized protein (149 aa).

Transmembrane regions (helical) follow at residues Val39–Gly61, Val82–Leu104, and Trp119–Leu141.

This sequence to M.pneumoniae MPN_090.

It localises to the cell membrane. This is an uncharacterized protein from Mycoplasma pneumoniae (strain ATCC 29342 / M129 / Subtype 1) (Mycoplasmoides pneumoniae).